A 630-amino-acid polypeptide reads, in one-letter code: Plastin-1 (630 aa).

N-acetylmethionine is present on methionine 1. 2 EF-hand domains span residues glutamate 11–proline 46 and lysine 51–lysine 86. Positions 24, 26, 28, 30, 35, 64, 66, 68, 70, and 75 each coordinate Ca(2+). 2 actin-binding regions span residues threonine 108 to lysine 381 and proline 382 to leucine 626. Calponin-homology (CH) domains are found at residues glutamate 122–leucine 238, leucine 266–proline 377, serine 396–threonine 505, and lysine 517–leucine 626.

In terms of assembly, monomer. In terms of processing, phosphorylated. In the inner ear, it is expressed in the organ of Corti. Abundant in the utricle (at protein level).

It is found in the cytoplasm. The protein resides in the cell projection. It localises to the stereocilium. Actin-bundling protein. In the inner ear, it is required for stereocilia formation. Mediates liquid packing of actin filaments that is necessary for stereocilia to grow to their proper dimensions. This chain is Plastin-1 (Pls1), found in Mus musculus (Mouse).